The following is a 519-amino-acid chain: Berghepain-1 (519 aa).

Over 1-32 (MINDIRRINITTSSIESLNENSKYLKRNHKRT) the chain is Cytoplasmic. A helical; Signal-anchor for type II membrane protein membrane pass occupies residues 33–53 (IKICAYAITTFALFFIVVVYF). The Lumenal portion of the chain corresponds to 54–519 (KNQTNVNDAN…IGIDVFFPIL (466 aa)). N-linked (GlcNAc...) asparagine glycosylation is found at N55 and N143. 4 disulfide bridges follow: C298-C340, C333-C373, C358-C378, and C427-C508. C301 is an active-site residue. N-linked (GlcNAc...) asparagine glycosylation is present at N432. Active-site residues include H433 and N483.

This sequence belongs to the peptidase C1 family.

It localises to the membrane. In terms of biological role, cysteine protease. Required for host hepatocyte-derived merozoite infectivity and to a lesser extent for host erythrocyte-derived merozoite infectivity. This is Berghepain-1 from Plasmodium berghei (strain Anka).